Here is a 540-residue protein sequence, read N- to C-terminus: Coiled-coil domain-containing protein 116 (540 aa).

The stretch at 79–102 (QVLDSLQTVVEQATECVATMKTEA) forms a coiled coil. The disordered stretch occupies residues 347 to 400 (PGNSDLQPSSKASLPTDREARGETCYSPTSASSPKTSHRKSKDRRGSPSNAVQM). 2 stretches are compositionally biased toward polar residues: residues 350–359 (SDLQPSSKAS) and 372–381 (YSPTSASSPK). At Ser393 the chain carries Phosphoserine.

It localises to the cytoplasm. It is found in the cytoskeleton. The protein localises to the microtubule organizing center. Its subcellular location is the centrosome. This is Coiled-coil domain-containing protein 116 (Ccdc116) from Rattus norvegicus (Rat).